A 491-amino-acid chain; its full sequence is Ketol-acid reductoisomerase (NADP(+)) (491 aa).

The 194-residue stretch at 15–208 (AQLGKCRFMG…GGHRAGVLES (194 aa)) folds into the KARI N-terminal Rossmann domain. NADP(+) contacts are provided by residues 45 to 48 (CGAQ), arginine 68, arginine 76, serine 78, and 108 to 110 (DKQ). Histidine 132 is an active-site residue. Residue glycine 158 participates in NADP(+) binding. KARI C-terminal knotted domains are found at residues 209–344 (SFVA…TAPQ) and 345–484 (YEGK…MTDM). Residues aspartate 217, glutamate 221, glutamate 389, and glutamate 393 each contribute to the Mg(2+) site. Serine 414 contributes to the substrate binding site.

The protein belongs to the ketol-acid reductoisomerase family. Mg(2+) serves as cofactor.

It carries out the reaction (2R)-2,3-dihydroxy-3-methylbutanoate + NADP(+) = (2S)-2-acetolactate + NADPH + H(+). It catalyses the reaction (2R,3R)-2,3-dihydroxy-3-methylpentanoate + NADP(+) = (S)-2-ethyl-2-hydroxy-3-oxobutanoate + NADPH + H(+). Its pathway is amino-acid biosynthesis; L-isoleucine biosynthesis; L-isoleucine from 2-oxobutanoate: step 2/4. It functions in the pathway amino-acid biosynthesis; L-valine biosynthesis; L-valine from pyruvate: step 2/4. Its function is as follows. Involved in the biosynthesis of branched-chain amino acids (BCAA). Catalyzes an alkyl-migration followed by a ketol-acid reduction of (S)-2-acetolactate (S2AL) to yield (R)-2,3-dihydroxy-isovalerate. In the isomerase reaction, S2AL is rearranged via a Mg-dependent methyl migration to produce 3-hydroxy-3-methyl-2-ketobutyrate (HMKB). In the reductase reaction, this 2-ketoacid undergoes a metal-dependent reduction by NADPH to yield (R)-2,3-dihydroxy-isovalerate. The sequence is that of Ketol-acid reductoisomerase (NADP(+)) from Escherichia coli (strain 55989 / EAEC).